The primary structure comprises 274 residues: Leucyl/phenylalanyl-tRNA--protein transferase (274 aa).

This sequence belongs to the L/F-transferase family.

The protein localises to the cytoplasm. It carries out the reaction N-terminal L-lysyl-[protein] + L-leucyl-tRNA(Leu) = N-terminal L-leucyl-L-lysyl-[protein] + tRNA(Leu) + H(+). It catalyses the reaction N-terminal L-arginyl-[protein] + L-leucyl-tRNA(Leu) = N-terminal L-leucyl-L-arginyl-[protein] + tRNA(Leu) + H(+). The catalysed reaction is L-phenylalanyl-tRNA(Phe) + an N-terminal L-alpha-aminoacyl-[protein] = an N-terminal L-phenylalanyl-L-alpha-aminoacyl-[protein] + tRNA(Phe). Functionally, functions in the N-end rule pathway of protein degradation where it conjugates Leu, Phe and, less efficiently, Met from aminoacyl-tRNAs to the N-termini of proteins containing an N-terminal arginine or lysine. This chain is Leucyl/phenylalanyl-tRNA--protein transferase, found in Psychrobacter cryohalolentis (strain ATCC BAA-1226 / DSM 17306 / VKM B-2378 / K5).